A 152-amino-acid chain; its full sequence is Protein SprT-like (152 aa).

The region spanning 7-147 is the SprT-like domain; it reads QRLVEEVSLQ…CGKCKGKLKP (141 aa). Residue H67 coordinates Zn(2+). E68 is a catalytic residue. H71 is a Zn(2+) binding site.

The protein belongs to the SprT family. Requires Zn(2+) as cofactor.

The protein localises to the cytoplasm. In Bacillus cereus (strain ATCC 14579 / DSM 31 / CCUG 7414 / JCM 2152 / NBRC 15305 / NCIMB 9373 / NCTC 2599 / NRRL B-3711), this protein is Protein SprT-like.